A 636-amino-acid chain; its full sequence is MSPAAGAPGSGPGRRRLPALDVRRFSPVRKSRPVPPRAPGRALEVLVLLCSVAAAVAAVAQPLALGRTLDLLLRDGDAGWWLPLSAALLLGELLLDSATSLFTGRCNATWTASVRTRALRGLLRTAPEHARPYPPGDIGTRLTLNAADAGGAPAARAALAASLITPLGALVALALVDVWVALCVLTGLPALALLLRSFARDTGATVAAYQRTQSLIASRLLEALEGADTIGAAGTGERERARVLAPLAELAAQGRHMWALHGRALGRSGVLVPLLTLAATAVGGLRLAAGELSVGDLLAVGRYAQLTAGVGAAASLLGAIVRAREARRRTRELERMTATVYGTRRLPPNGPGELRLCGVRVLRGGREVLRADGVRVPGGSTVAVVGRSGAGKSVLAAVAGRLIDPDEGYVLLDGVRLDRLTHEALRTEVAYAFERPVLGEGTIAEAVADGARRSSRERVRQAARAAGADGFVRRLPHGYDTPLPRAPLSGGEHQRLGLARAFAHAGRLLVLDDATSSLDTATEHEVDLALRRSVRPGTRLVVAHRPSVADRADLVLWLEDGQVRAVGTHRELWHTAGYREVFGAGAGAGAGAGAGAGADAGAGADAGPGPDSGAATAVGGSGPGPVRRPEPEEARP.

5 consecutive transmembrane segments (helical) span residues 45 to 65 (VLVL…PLAL), 78 to 98 (AGWW…LDSA), 175 to 195 (LVDV…ALLL), 269 to 289 (GVLV…RLAA), and 297 to 317 (LLAV…ASLL). In terms of domain architecture, ABC transmembrane type-1 spans 45–322 (VLVLLCSVAA…AASLLGAIVR (278 aa)). The 232-residue stretch at 354-585 (LRLCGVRVLR…AGYREVFGAG (232 aa)) folds into the ABC transporter domain. Position 386–393 (386–393 (GRSGAGKS)) interacts with ATP. Positions 589–606 (GAGAGAGAGADAGAGADA) are enriched in gly residues. Positions 589–636 (GAGAGAGAGADAGAGADAGPGPDSGAATAVGGSGPGPVRRPEPEEARP) are disordered. Residues 607–618 (GPGPDSGAATAV) are compositionally biased toward low complexity. Basic and acidic residues predominate over residues 627–636 (RRPEPEEARP).

This sequence belongs to the ABC transporter superfamily.

The protein resides in the cell membrane. Its function is as follows. Probably involved in exporting SapB from the cell. Expression of the ram locus (ramA, ramB and ramR) induces rapid aerial mycelium formation in S.lividans. This Streptomyces coelicolor (strain ATCC BAA-471 / A3(2) / M145) protein is ABC transporter ATP-binding protein RamA.